The primary structure comprises 295 residues: Dipeptide transport system permease protein DppC (295 aa).

Transmembrane regions (helical) follow at residues 27 to 47 (ALIG…APYI), 97 to 117 (VFAG…LGLI), 132 to 152 (LIDI…VSIL), 156 to 178 (LANA…TRAA), 202 to 222 (MFIV…TMGI), 226 to 246 (ILEL…TPEL), and 262 to 282 (WLVT…NLMG). Residues 93–282 (TRISVFAGFI…SLVLAFNLMG (190 aa)) form the ABC transmembrane type-1 domain.

Belongs to the binding-protein-dependent transport system permease family. OppBC subfamily.

The protein localises to the cell inner membrane. Its function is as follows. Part of the ABC transporter DppBCDF involved in dipeptide transport. Responsible for the translocation of the substrate across the membrane. This is Dipeptide transport system permease protein DppC (dppC) from Haemophilus influenzae (strain ATCC 51907 / DSM 11121 / KW20 / Rd).